Consider the following 394-residue polypeptide: Flap endonuclease 1 (394 aa).

Residues 1–104 form an N-domain region; sequence MGIKQLFTII…GELARRYQRK (104 aa). Asp-34 is a binding site for Mg(2+). DNA is bound by residues Arg-47 and Arg-70. Mg(2+) contacts are provided by Asp-86, Glu-158, Glu-160, Asp-179, and Asp-181. The I-domain stretch occupies residues 122 to 253; that stretch reads DVEKFSRRTV…STALKLIREH (132 aa). A DNA-binding site is contributed by Glu-158. DNA is bound by residues Gly-231 and Asp-233. Asp-233 contacts Mg(2+). The interaction with PCNA stretch occupies residues 340 to 348; the sequence is QQQRLEGFF. The interval 358 to 394 is disordered; it reads QKAHKRKLEVKAEEAKKKLKAEKKEKAKAKARPRGTA. A compositionally biased stretch (basic residues) spans 374–394; sequence KKLKAEKKEKAKAKARPRGTA.

The protein belongs to the XPG/RAD2 endonuclease family. FEN1 subfamily. In terms of assembly, interacts with PCNA. Three molecules of FEN1 bind to one PCNA trimer with each molecule binding to one PCNA monomer. PCNA stimulates the nuclease activity without altering cleavage specificity. The cofactor is Mg(2+). In terms of processing, phosphorylated. Phosphorylation upon DNA damage induces relocalization to the nuclear plasma.

It is found in the nucleus. The protein localises to the nucleolus. The protein resides in the nucleoplasm. Its subcellular location is the mitochondrion. Its function is as follows. Structure-specific nuclease with 5'-flap endonuclease and 5'-3' exonuclease activities involved in DNA replication and repair. During DNA replication, cleaves the 5'-overhanging flap structure that is generated by displacement synthesis when DNA polymerase encounters the 5'-end of a downstream Okazaki fragment. It enters the flap from the 5'-end and then tracks to cleave the flap base, leaving a nick for ligation. Also involved in the long patch base excision repair (LP-BER) pathway, by cleaving within the apurinic/apyrimidinic (AP) site-terminated flap. Acts as a genome stabilization factor that prevents flaps from equilibrating into structures that lead to duplications and deletions. Also possesses 5'-3' exonuclease activity on nicked or gapped double-stranded DNA, and exhibits RNase H activity. Also involved in replication and repair of rDNA and in repairing mitochondrial DNA. The sequence is that of Flap endonuclease 1 from Pyricularia oryzae (strain 70-15 / ATCC MYA-4617 / FGSC 8958) (Rice blast fungus).